A 296-amino-acid chain; its full sequence is Deleted in azoospermia-like (296 aa).

Residues 1-18 show a composition bias toward polar residues; the sequence is MSAANPETPNSTISREAN. The disordered stretch occupies residues 1-25; it reads MSAANPETPNSTISREANTQSSSAA. Residues 40-115 form the RRM domain; the sequence is NTVFVGGIDV…KKLKLGPAIR (76 aa). A homodimerization region spans residues 80–132; it reads KGYGFVSFFNDVDVQKIVESQINFHGKKLKLGPAIRKQNLCAYHVQPRPLVFN. In terms of domain architecture, DAZ spans 167–190; sequence AYPPYPNSPVQVITGYQLPVYNYQ. Position 277 is a phosphotyrosine (Tyr277).

Belongs to the RRM DAZ family. In terms of assembly, homodimer and heterodimer. Forms a heterodimer with DAZ. Interacts with BOLL, DAZAP1 and DAZAP2. Interacts with PUM2 Multiple DAZL RRMs can bind to a single RNA containing multiple GUU triplets. Testis specific.

The protein resides in the cytoplasm. The protein localises to the nucleus. RNA-binding protein, which is essential for gametogenesis in both males and females. Plays a central role during spermatogenesis. Acts by binding to the 3'-UTR of mRNA, specifically recognizing GUU triplets, and thereby regulating the translation of key transcripts. The protein is Deleted in azoospermia-like (DAZL) of Callithrix jacchus (White-tufted-ear marmoset).